Reading from the N-terminus, the 122-residue chain is Large ribosomal subunit protein uL14 (122 aa).

Belongs to the universal ribosomal protein uL14 family. As to quaternary structure, part of the 50S ribosomal subunit. Forms a cluster with proteins L3 and L19. In the 70S ribosome, L14 and L19 interact and together make contacts with the 16S rRNA in bridges B5 and B8.

Binds to 23S rRNA. Forms part of two intersubunit bridges in the 70S ribosome. The sequence is that of Large ribosomal subunit protein uL14 from Chlorobaculum tepidum (strain ATCC 49652 / DSM 12025 / NBRC 103806 / TLS) (Chlorobium tepidum).